The sequence spans 616 residues: MAPRARRRRPLFALLLLCALLARLQVALQIAPPCTSEKHYEHLGRCCNKCEPGKYMSSKCTTTSDSVCLPCGPDEYLDSWNEEDKCLLHKVCDTGKALVAVVAGNSTTPRRCACTAGYHWSQDCECCRRNTECAPGLGAQHPLQLNKDTVCKPCLAGYFSDAFSSTDKCRPWTNCTFLGKRVEHHGTEKSDAVCSSSLPARKPPNEPHVYLPGLIILLLFASVALVAAIIFGVCYRKKGKALTANLWHWINEACGRLSGDKESSGDSCVSTHTANFGQQGACEGVLLLTLEEKTFPEDMCYPDQGGVCQGTCVGGGPYAQGEDARMLSLVSKTEIEEDSFRQMPTEDEYMDRPSQPTDQLLFLTEPGSKSTPPFSEPLEVGENDSLSQCFTGTQSTVGSESCNCTEPLCRTDWTPMSSENYLQKEVDSGHCPHWAASPSPNWADVCTGCRNPPGEDCEPLVGSPKRGPLPQCAYGMGLPPEEEASRTEARDQPEDGADGRLPSSARAGAGSGSSPGGQSPASGNVTGNSNSTFISSGQVMNFKGDIIVVYVSQTSQEGAAAAAEPMGRPVQEETLARRDSFAGNGPRFPDPCGGPEGLREPEKASRPVQEQGGAKA.

Residues Met1 to Gln29 form the signal peptide. The Extracellular portion of the chain corresponds to Ile30–Pro212. Intrachain disulfides connect Cys34/Cys46, Cys47/Cys60, Cys50/Cys68, Cys71/Cys86, Cys92/Cys112, Cys114/Cys127, Cys124/Cys126, Cys133/Cys151, and Cys154/Cys169. TNFR-Cys repeat units follow at residues Cys34–Cys68, Cys71–Cys112, Cys114–Cys151, and Cys154–Cys194. Asn105 carries an N-linked (GlcNAc...) asparagine glycan. Residues Cys133, Ala134, and Ser160 each coordinate Na(+). Asn174 carries an N-linked (GlcNAc...) asparagine glycan. An intrachain disulfide couples Cys175 to Cys194. The helical transmembrane segment at Gly213–Val233 threads the bilayer. Residues Cys234–Ala616 lie on the Cytoplasmic side of the membrane. The segment at Pro468–Ser536 is disordered. Residues Glu483 to Pro493 show a composition bias toward basic and acidic residues. Low complexity predominate over residues Gly499 to Gly508. Residues Asn524–Ser536 show a composition bias toward polar residues. Residues Gly544–Val549 are required for interaction with EEIG1 and osteoclast differentiation. A disordered region spans residues Gln556 to Ala616. Over residues Val570–Ser580 the composition is skewed to basic and acidic residues. The residue at position 580 (Ser580) is a Phosphoserine.

As to quaternary structure, binds to the clefts between the subunits of the TNFSF11 ligand trimer to form a heterohexamer. Part of a complex composed of EEIG1, TNFRSF11A/RANK, PLCG2, GAB2, TEC and BTK; complex formation increases in the presence of TNFSF11/RANKL. Interacts with TRAF1, TRAF2, TRAF3, TRAF5 and TRAF6. Interacts (via cytoplasmic domain) with GAB2. Interacts (via cytoplasmic domain); with EEIG1 (via N-terminus); when in the presence of TNFSF11/RANKL. In terms of tissue distribution, ubiquitous expression with high levels in skeletal muscle, thymus, liver, colon, small intestine and adrenal gland.

The protein localises to the cell membrane. The protein resides in the membrane raft. Receptor for TNFSF11/RANKL/TRANCE/OPGL; essential for RANKL-mediated osteoclastogenesis. Its interaction with EEIG1 promotes osteoclastogenesis via facilitating the transcription of NFATC1 and activation of PLCG2. Involved in the regulation of interactions between T-cells and dendritic cells. This Homo sapiens (Human) protein is Tumor necrosis factor receptor superfamily member 11A (TNFRSF11A).